A 141-amino-acid chain; its full sequence is MFSCFKFISTPSLVKSTSQLLSRPLSAVVLKRPEILTDESLSSLAVSRPLTSLVSSRNFQTSAISRDIDTAAKFIGAGAATVGVAGSGAGIGTVFGSLIIGYARNPSLKQQLFSYAILGFALSEAMGLFCLMVAFLILFAM.

The transit peptide at 1–66 (MFSCFKFIST…RNFQTSAISR (66 aa)) directs the protein to the mitochondrion. Residues 82 to 102 (VGVAGSGAGIGTVFGSLIIGY) traverse the membrane as a helical segment. Position 109 is an N6,N6,N6-trimethyllysine (Lys-109). A helical transmembrane segment spans residues 117–137 (ILGFALSEAMGLFCLMVAFLI).

This sequence belongs to the ATPase C chain family. F-type ATPases have 2 components, CF(1) - the catalytic core - and CF(0) - the membrane proton channel. CF(1) has five subunits: alpha(3), beta(3), gamma(1), delta(1), epsilon(1). CF(0) has three main subunits: a, b and c. Interacts with DNAJC30; interaction is direct. Trimethylated by ATPSCKMT at Lys-109. Methylation is required for proper incorporation of the C subunit into the ATP synthase complex and mitochondrial respiration.

It is found in the mitochondrion membrane. In terms of biological role, mitochondrial membrane ATP synthase (F(1)F(0) ATP synthase or Complex V) produces ATP from ADP in the presence of a proton gradient across the membrane which is generated by electron transport complexes of the respiratory chain. F-type ATPases consist of two structural domains, F(1) - containing the extramembraneous catalytic core and F(0) - containing the membrane proton channel, linked together by a central stalk and a peripheral stalk. During catalysis, ATP synthesis in the catalytic domain of F(1) is coupled via a rotary mechanism of the central stalk subunits to proton translocation. Part of the complex F(0) domain. A homomeric c-ring of probably 10 subunits is part of the complex rotary element. In Pongo abelii (Sumatran orangutan), this protein is ATP synthase F(0) complex subunit C2, mitochondrial.